The following is a 615-amino-acid chain: 9-cis-epoxycarotenoid dioxygenase NCED1, chloroplastic (615 aa).

The N-terminal 41 residues, 1–41 (MPSPASNTWINTTLPSSCSSPFKDLASTSSSPTTLLPFKKR), are a transit peptide targeting the chloroplast. Disordered regions lie at residues 20–45 (SPFK…SSSN) and 62–101 (YQPT…KQPF). Composition is skewed to low complexity over residues 27-37 (STSSSPTTLLP) and 64-86 (PTST…TTTT). 3 residues coordinate Fe cation: H316, H365, and H430. A coiled-coil region spans residues 571–592 (KEWKSELQIVNAQNLKLEASIK). H602 is a binding site for Fe cation.

The protein belongs to the carotenoid oxygenase family. Fe(2+) is required as a cofactor.

The protein localises to the plastid. Its subcellular location is the chloroplast thylakoid membrane. It catalyses the reaction a 9-cis-epoxycarotenoid + O2 = a 12'-apo-carotenal + 2-cis,4-trans-xanthoxin. It carries out the reaction 9-cis-violaxanthin + O2 = (3S,5R,6S)-5,6-epoxy-3-hydroxy-5,6-dihydro-12'-apo-beta-caroten-12'-al + 2-cis,4-trans-xanthoxin. The catalysed reaction is 9'-cis-neoxanthin + O2 = (3S,5R,6R)-3,5-dihydroxy-6,7-didehydro-5,6-dihydro-12'-apo-beta-caroten-12'-al + 2-cis,4-trans-xanthoxin. Its function is as follows. Has a 11,12(11',12') 9-cis epoxycarotenoid cleavage activity. Catalyzes the first step of abscisic-acid biosynthesis from carotenoids, in response to water stress. Active on 9-cis-violaxanthin and 9'-cis-neoxanthin, but not on the all-trans isomers of violaxanthin and neoxanthin. The chain is 9-cis-epoxycarotenoid dioxygenase NCED1, chloroplastic (NCED1) from Phaseolus vulgaris (Kidney bean).